A 785-amino-acid polypeptide reads, in one-letter code: Solute carrier family 45 member 4 (785 aa).

The tract at residues 1 to 43 (MKMAPQNADSESMQVQELPVPLPDPQKPRDPEAETQEETTSEG) is disordered. 6 helical membrane-spanning segments follow: residues 64-84 (EFCYAMETALVTPILLQIGLP), 87-107 (YYSLTWFLSPVLGLIFTPLIG), 124-144 (ILALCVGVLIGVALFLNGSAI), 156-176 (PIGIVLTVLGVVVLDFSADAT), 197-217 (LNIHAFSAGLGGAIGYVLGGL), and 234-254 (VLFFFAAVIFSVSVALHLFSI). Disordered stretches follow at residues 259–309 (YSPQ…VQSE) and 401–430 (KVPNGRGSPPINSLSRSKVDLKPSVTSGSM). A phosphoserine mark is found at Ser442 and Ser472. Positions 478–505 (DLQQRQRSRHRNQSGATASSGDTESEEG) are disordered. The span at 490–499 (QSGATASSGD) shows a compositional bias: low complexity. Ser502 is modified (phosphoserine). 6 helical membrane-spanning segments follow: residues 525-545 (LMWLCLCHLLTWFSVIAEAVF), 577-597 (MGCWGLVIYAATGAICSALLQ), 609-629 (IIYMLGTLGFSVGTAVMAMFP), 631-651 (VYVAMVTISTMGVVSMSISYC), 683-703 (ILSCQVYISQILVASALGGVV), and 709-729 (IVVIPIVASVGSFLGFLTATF). The interval 741–772 (KEEQKGLSSGPAGEGEGGAGSEKPTVLKLSRK) is disordered. A Phosphoserine modification is found at Ser749.

It belongs to the glycoside-pentoside-hexuronide (GPH) cation symporter transporter (TC 2.A.2) family. As to expression, ubiquitously expressed.

Its subcellular location is the membrane. It catalyses the reaction sucrose(out) + H(+)(out) = sucrose(in) + H(+)(in). In terms of biological role, proton-associated sucrose transporter. May be able to transport also glucose and fructose. This Mus musculus (Mouse) protein is Solute carrier family 45 member 4 (Slc45a4).